A 1174-amino-acid polypeptide reads, in one-letter code: Pecanex-like protein 4 (1174 aa).

14 consecutive transmembrane segments (helical) span residues 40-60 (IYVN…TGTL), 72-92 (AAAL…LISV), 140-160 (TVFH…YLLP), 173-193 (TAVL…SLIV), 217-237 (LYIF…NIPA), 244-264 (ILHI…LPPP), 284-304 (SMST…AAVV), 307-327 (FIPS…LLSL), 366-386 (FLFI…HHYV), 394-414 (SGAQ…VWIL), 451-471 (IGAV…VAFL), 543-563 (LIQF…LWTE), 580-600 (VFAP…SPLL), and 643-663 (LTAA…LPGS). The segment covering 785–797 (PSTQENKTENTGE) has biased composition (polar residues). Residues 785–875 (PSTQENKTEN…DDHSAGTGPK (91 aa)) are disordered. Asparagine 790 carries N-linked (GlcNAc...) asparagine glycosylation. A compositionally biased stretch (low complexity) spans 798-810 (ASPALPPAANSSP). A compositionally biased stretch (basic and acidic residues) spans 835–846 (PAIKNRKEKLQS). N-linked (GlcNAc...) asparagine glycosylation is found at asparagine 1122 and asparagine 1149.

Belongs to the pecanex family.

The protein localises to the membrane. The sequence is that of Pecanex-like protein 4 from Mus musculus (Mouse).